Consider the following 55-residue polypeptide: MRKWQCVVCGFIYDEALGLPEEGIPAGTRWEDIPADWVCPDCGVGKIDFEMIEIA.

Residues 1–54 (MRKWQCVVCGFIYDEALGLPEEGIPAGTRWEDIPADWVCPDCGVGKIDFEMIEI) enclose the Rubredoxin-like domain. The Fe cation site is built by Cys-6, Cys-9, Cys-39, and Cys-42.

This sequence belongs to the rubredoxin family. The cofactor is Fe(3+).

The protein resides in the cytoplasm. Its pathway is hydrocarbon metabolism; alkane degradation. Functionally, involved in the hydrocarbon hydroxylating system, which transfers electrons from NADH to rubredoxin reductase and then through rubredoxin to alkane 1 monooxygenase. The polypeptide is Rubredoxin-2 (rubA2) (Pseudomonas aeruginosa (strain ATCC 15692 / DSM 22644 / CIP 104116 / JCM 14847 / LMG 12228 / 1C / PRS 101 / PAO1)).